We begin with the raw amino-acid sequence, 269 residues long: Cell cycle regulator CcrZ (269 aa).

The ATP site is built by Phe39, His76, Trp77, Met78, and Gly80. The short motif at 164–171 (HCDVNHNN) is the Brenner's motif [HXDhX3N] element. The active-site Proton acceptor is the Asp166. The APH signature appears at 180-203 (LYLIDWDGAMIADPAMDLGPLLYH).

This sequence belongs to the aminoglycoside phosphotransferase family. As to quaternary structure, monomer in solution. Interacts with DnaA (via domains I (1-82) and III (111-326)). Interacts with DnaB. Interacts with FtsZ.

It localises to the cytoplasm. It carries out the reaction D-ribose + ATP = D-ribose 5-phosphate + ADP + H(+). The catalysed reaction is 2-deoxy-D-ribose + ATP = 2-deoxy-D-ribose 5-phosphate + ADP + H(+). Activated by D-ribose and 2-deoxy-D-ribose. Slightly activated by kanamycin and gentamicin. Its function is as follows. Plays a role in cell cycle regulation and chromosome integrity. Activates DnaA-dependent chromosomal DNA replication initiation ensuring that the chromosome is replicated at the right time during the cell cycle. May regulate replication initiation through phosphorylation of a possible second messenger or metabolite, and by interacting with replication initiation proteins. Has ATPase activity with D-ribose and 2-deoxy-D-ribose in vitro, but not with choline. Involved in DNA damage response. The protein is Cell cycle regulator CcrZ of Bacillus subtilis (strain 168).